A 253-amino-acid chain; its full sequence is Small ribosomal subunit protein uS3 (253 aa).

A KH type-2 domain is found at 38 to 106 (IRKYIHARLS…EVQINIFEIK (69 aa)). The interval 216–253 (AGMDKKQAGQGGGKGGDSPRGDRKPFNKGGKPDARKRK) is disordered. Positions 232–253 (DSPRGDRKPFNKGGKPDARKRK) are enriched in basic and acidic residues.

It belongs to the universal ribosomal protein uS3 family. Part of the 30S ribosomal subunit. Forms a tight complex with proteins S10 and S14.

Binds the lower part of the 30S subunit head. Binds mRNA in the 70S ribosome, positioning it for translation. The sequence is that of Small ribosomal subunit protein uS3 from Flavobacterium psychrophilum (strain ATCC 49511 / DSM 21280 / CIP 103535 / JIP02/86).